Consider the following 253-residue polypeptide: Phosphoribosylaminoimidazole-succinocarboxamide synthase (253 aa).

The protein belongs to the SAICAR synthetase family.

The catalysed reaction is 5-amino-1-(5-phospho-D-ribosyl)imidazole-4-carboxylate + L-aspartate + ATP = (2S)-2-[5-amino-1-(5-phospho-beta-D-ribosyl)imidazole-4-carboxamido]succinate + ADP + phosphate + 2 H(+). It functions in the pathway purine metabolism; IMP biosynthesis via de novo pathway; 5-amino-1-(5-phospho-D-ribosyl)imidazole-4-carboxamide from 5-amino-1-(5-phospho-D-ribosyl)imidazole-4-carboxylate: step 1/2. This chain is Phosphoribosylaminoimidazole-succinocarboxamide synthase, found in Roseobacter denitrificans (strain ATCC 33942 / OCh 114) (Erythrobacter sp. (strain OCh 114)).